A 2020-amino-acid chain; its full sequence is Metacaspase-2 (2020 aa).

2 stretches are compositionally biased toward basic and acidic residues: residues 51 to 60 (SENDRNESIQ) and 69 to 78 (DNRKTNKSEK). Disordered regions lie at residues 51-78 (SEND…KSEK) and 573-614 (RNGN…NINN). Low complexity predominate over residues 576–614 (NINNNKNNNINNNNNNINNNNNNINNNNNNINNNNNINN).

The protein belongs to the peptidase C14B family.

Its subcellular location is the cytoplasm. Its activity is regulated as follows. Ca(2+) does not appear to affect catalytic activity. In terms of biological role, protease that cleaves specifically after arginine or lysine residues. May play a role in parasite growth and/or development. This is Metacaspase-2 from Plasmodium falciparum (isolate 3D7).